The chain runs to 510 residues: NAD(P)H-quinone oxidoreductase subunit 2 B, chloroplastic (510 aa).

Transmembrane regions (helical) follow at residues 24–44 (LLLFDGSLIFPECILIFGLIL), 57–77 (LPWFYFISSTSLVMSITALLF), 99–119 (IFQFLILLCSTLCIPLSVEYI), 124–144 (MAITEFLLFVLTATLGGMFLC), 149–169 (LITIFVAPECFSFCSYLLSGY), 183–203 (YLLMGGASSSILVHAFSWLYG), 227–247 (PGISIALLFITVGIGFKLSPA), 295–315 (WHLLLEILAILSMILGNIIAI), 323–343 (MLAYSSIGQIGYVIIGIIVGD), 354–374 (YMLFYISMNLGTFACIVLFGL), 395–415 (ALSLALCLLSLGGLPPLAGFF), 428–448 (GLYSLVLIGLLTSVVSIYYYL), and 484–504 (MIVCVIASTIPGISMNPIIAI).

The protein belongs to the complex I subunit 2 family. As to quaternary structure, NDH is composed of at least 16 different subunits, 5 of which are encoded in the nucleus.

It localises to the plastid. The protein resides in the chloroplast thylakoid membrane. It carries out the reaction a plastoquinone + NADH + (n+1) H(+)(in) = a plastoquinol + NAD(+) + n H(+)(out). The catalysed reaction is a plastoquinone + NADPH + (n+1) H(+)(in) = a plastoquinol + NADP(+) + n H(+)(out). Functionally, NDH shuttles electrons from NAD(P)H:plastoquinone, via FMN and iron-sulfur (Fe-S) centers, to quinones in the photosynthetic chain and possibly in a chloroplast respiratory chain. The immediate electron acceptor for the enzyme in this species is believed to be plastoquinone. Couples the redox reaction to proton translocation, and thus conserves the redox energy in a proton gradient. The protein is NAD(P)H-quinone oxidoreductase subunit 2 B, chloroplastic of Jasminum nudiflorum (Winter jasmine).